The following is a 206-amino-acid chain: Outer-membrane lipoprotein carrier protein (206 aa).

The first 23 residues, 1 to 23, serve as a signal peptide directing secretion; that stretch reads MKPLFPMLTAAAIAAGLAAPAQA.

It belongs to the LolA family. As to quaternary structure, monomer.

It is found in the periplasm. Functionally, participates in the translocation of lipoproteins from the inner membrane to the outer membrane. Only forms a complex with a lipoprotein if the residue after the N-terminal Cys is not an aspartate (The Asp acts as a targeting signal to indicate that the lipoprotein should stay in the inner membrane). The sequence is that of Outer-membrane lipoprotein carrier protein from Chromobacterium violaceum (strain ATCC 12472 / DSM 30191 / JCM 1249 / CCUG 213 / NBRC 12614 / NCIMB 9131 / NCTC 9757 / MK).